The primary structure comprises 582 residues: BTB/POZ domain and ankyrin repeat-containing protein NPR1 (582 aa).

Polar residues predominate over residues 1–12 (MEPPTSHVTNAF). A disordered region spans residues 1–27 (MEPPTSHVTNAFSDSDSASVEEGDADA). Positions 55–140 (ADARIAVPGG…VLDYLYSGRV (86 aa)) constitute a BTB domain. A C2HC NPR-type zinc finger spans residues 147–161 (ACLCVDEDCAHVGCH). 4 residues coordinate Zn(2+): cysteine 150, cysteine 155, histidine 157, and cysteine 160. 4 ANK repeats span residues 229–258 (RSNLDMITLEKSLPPDVIKQIIDARLSLGL), 269–299 (KHVRRIHRALDSDDVELVRMLLTEGQTNLDD), 301–328 (FALHYAVEHCDSKITTELLDLALADVNH), and 332–361 (RGYTVLHIAARRREPKIIVSLLTKGARPAD). The tract at residues 391 to 526 (PSPKDRLCIE…VLDKIMDDET (136 aa)) is salicylic acid-binding core (SBC). Salicylate is bound at residue arginine 436. 2 disordered regions span residues 525 to 544 (ETDPVSLGRDTSAEKRKRFH) and 551 to 582 (QKAFHEDKEENDRSGLSSSSSSTSIGAIRPRR). Residues 553 to 563 (AFHEDKEENDR) are compositionally biased toward basic and acidic residues. Residues 564 to 574 (SGLSSSSSSTS) show a composition bias toward low complexity.

The protein belongs to the plant 'ANKYRIN-BTB/POZ' family. 'NPR1-like' subfamily. As to quaternary structure, oligomer in an uninduced state; disulfide-linked. Forms activated monomer upon changes in cellular redox potential. Interacts with TGA2.2. Interacts with NRR.

Its subcellular location is the cytoplasm. The protein resides in the nucleus. It is found in the nuclear body. It functions in the pathway protein modification; protein ubiquitination. Functionally, salicylic acid (SA)-binding substrate-specific adapter of an E3 ubiquitin-protein ligase complex (CUL3-RBX1-BTB) which mediates the ubiquitination and subsequent proteasomal degradation of target proteins. Transcription cofactor that represses gene expression in the absence of salicylic acid (SA), when attached to negative cis-elements (W-box) with WRKY transcription factors, but stimulates gene expression upon activation by SA, when sumoylated and attached to positive cis-elements (as-1) with TGA transcription factors, thus confering immunity through a series of gene regulations ending in a significant increase in antimicrobial and defense genes expression. Key positive factor of disease resistance. Involved in defense response against the bacterial blight disease caused by Xanthomonas oryzae pv. oryzae (Xoo). Plants over-expressing NPR1/NH1 acquire high levels of resistance to Xoo, express constitutively defense genes and develop lesion-mimic spots on leaves at pre-flowering stage. Involved in basal resistance to the blast pathogen Magnaporthe oryzae. Plants over-expressing NPR1/NH1 have increased resistance to M.oryzae infection. Plays an essential role in benzothiadiazole (BTH)-induced resistance to the blast fungus disease caused by Magnaporthe oryzae. Functions as a transcriptional coactivator of TGA2.1 and LG2 in vitro. Involved in defense response against herbivore. Plants silencing NPR1/NH1 have increased herbivore-induced trypsin proteinase inhibitors and volatiles, which reduces the performance of the striped stem borer (SSB) Chilo suppressalis. The polypeptide is BTB/POZ domain and ankyrin repeat-containing protein NPR1 (Oryza sativa subsp. indica (Rice)).